Here is a 177-residue protein sequence, read N- to C-terminus: TRAF-interacting protein with FHA domain-containing protein A (177 aa).

An FHA domain is found at 48–104; sequence VAFGRDYNVCRYPLLSNRVSRIQFNLQFFKHFNCSTTAIEIKNLSKKNKLYVDNLEL.

The protein belongs to the TIFA family. In terms of assembly, interacts with traf6.

Its subcellular location is the cytoplasm. In terms of biological role, adapter molecule that plays a key role in the activation of pro-inflammatory NF-kappa-B signaling following detection of bacterial pathogen-associated molecular pattern metabolites (PAMPs). Promotes activation of an innate immune response by inducing the oligomerization and polyubiquitination of TRAF6, which leads to the activation of TAK1 and IKK through a proteasome-independent mechanism. The protein is TRAF-interacting protein with FHA domain-containing protein A of Xenopus tropicalis (Western clawed frog).